The primary structure comprises 975 residues: MLKSISGGVGVASTERGGGGGGCGGGGAGGSASGSRSTSGSGRASCGLGSSSISSGLSAVCGFVTGASGGGGFERDRDRDRGLANISGGSTPAGILYCPACMAAANQQSPSQNSSPHHESFFLRSSFKSSKRNKARKSASTAGCLDAQHIRANLRMSMSSSMRSSRGNGGGGAASSSHPPGSSCSSGPGGSGCSMAYDAASNASSGSGSGSGKATSPGSYSCNALNVDFTSYTATHQWTRMLECAEFVGAKRSKHTVVAYKDAMFVFGGDNGKNMLNDLIRFGVKDKSWGRACATGTPPAPRYHHSAVVAGSSMFIFGGYTGDIHSNSNLTNKNDLFEYKFQSAMWVEWKFSGRQPVPRSAHGAAVYDNKMWIYAGYDGNARLNDMWTLNLTGENQWEEVDQLGDRPPTCCNFPVAVARDAMYVFSGQSGLQITNSLFEFHFKTRTWRRISNEPVLRGATSAPPSRRYGHTMVHHDRFLYVFGGSADSTLPNDLHCYDLDSQVWSVIQPEQNSDVPSGRVFHASAVICDAMYIFGGTVDNSVRRGDTYRFQFSSYPKCTLRDDFGKFFQDKQFCDIQFIVGAEEIRILAHIAFVAARSKYLRNKILAAREARQQQMEKVYGVGQVDALALNAGAGGDRGPMLEVRLANASPEAFEIILNYIYTDRIDLKDTYSKNIIILITDIYQLAGLFTMPRLAHGCIQYLDYKINKLNVLEALYNADKSNIKIIKDHCMQFIIKEENFTDVVMSSEFSDLDKPLLVEIIRKRLYPSKLVIDTSYEGNIGTTLEIDLCAFLESTGKDFCDISLVLEDHVIPAHKSVLSSRCTYFQGMFRSFMPPDNTVNIQIGEISPSLEAFHSLLRYIYYGETKMPPQDALYLFQAPCFYGLANNRLHAFCKYSLEHNITFENVLQTLEASDITKIYDIKEYALKLIVKDFAKVARLPKIAGLSRELLLEIIRAVADSHGEFLTRININTDI.

A compositionally biased stretch (gly residues) spans 16–32; it reads RGGGGGGCGGGGAGGSA. Disordered regions lie at residues 16–41 and 158–186; these read RGGG…TSGS and MSSS…SCSS. Residues 174-186 show a composition bias toward low complexity; sequence ASSSHPPGSSCSS. Kelch repeat units lie at residues 263–312, 314–369, 370–417, 421–467, 478–524, and 530–581; these read AMFV…VAGS, MFIF…VYDN, KMWI…PVAV, AMYV…PSRR, FLYV…FHAS, and AMYI…FIVG. BTB domains lie at 574–670 and 801–870; these read CDIQ…DLKD and CDIS…KMPP.

This sequence belongs to the LZTR1 family. As to quaternary structure, component of some BCR (BTB-CUL3-RBX1) E3 ubiquitin-protein ligase complex. As to expression, expressed in Rdl-expressing neurons of the mushroom body, the neurons projecting to the LC9 optic glomerulus and in a neuronal cluster near the subesophageal ganglion (at protein level).

It participates in protein modification; protein ubiquitination. Its function is as follows. Inhibitor of Ras signaling. Acts as a substrate-specific adapter of a BCR (BTB-CUL3-RBX1) E3 ubiquitin-protein ligase complex that mediates ubiquitination of Ras. Together with Nf1, plays an important role for normal sleep behavior, mainly during the night. Might affect sleep by modulating GABA signaling in Rdl-expressing neurons. Might play a role in the regulation of brain glycogen metabolism and organismal levels of triglycerides. The polypeptide is Leucine-zipper-like transcriptional regulator 1 homolog (Drosophila melanogaster (Fruit fly)).